The chain runs to 404 residues: Omega-3 fatty acid desaturase, chloroplastic (404 aa).

Positions 28–50 (TVDSSSSPPIEEEPKTQRFDPGA) are disordered. The Histidine box-1 signature appears at 121–125 (HDCGH). Residues 157–161 (HRTHH) carry the Histidine box-2 motif. Residues 324 to 328 (HVIHH) carry the Histidine box-3 motif.

Belongs to the fatty acid desaturase type 1 family.

It is found in the plastid. Its subcellular location is the chloroplast membrane. It participates in lipid metabolism; polyunsaturated fatty acid biosynthesis. In terms of biological role, chloroplast omega-3 fatty acid desaturase introduces the third double bond in the biosynthesis of 16:3 and 18:3 fatty acids, important constituents of plant membranes. It is thought to use ferredoxin as an electron donor and to act on fatty acids esterified to galactolipids, sulfolipids and phosphatidylglycerol. This chain is Omega-3 fatty acid desaturase, chloroplastic (FAD7), found in Brassica napus (Rape).